Consider the following 232-residue polypeptide: Ornithine carbamoyltransferase (232 aa).

Carbamoyl phosphate contacts are provided by residues Gln-15, Arg-39, and 66–69 (HPTQ). Residues Asn-99, Asp-163, and 167–168 (SM) contribute to the L-ornithine site. Residues 204–207 (HCLP) and Thr-232 each bind carbamoyl phosphate.

Belongs to the aspartate/ornithine carbamoyltransferase superfamily. OTCase family.

Its subcellular location is the cytoplasm. It catalyses the reaction carbamoyl phosphate + L-ornithine = L-citrulline + phosphate + H(+). It participates in amino-acid biosynthesis; L-arginine biosynthesis; L-arginine from L-ornithine and carbamoyl phosphate: step 1/3. In terms of biological role, reversibly catalyzes the transfer of the carbamoyl group from carbamoyl phosphate (CP) to the N(epsilon) atom of ornithine (ORN) to produce L-citrulline. The sequence is that of Ornithine carbamoyltransferase (argF) from Neisseria pharyngis.